The sequence spans 227 residues: Cytochrome c oxidase subunit 2 (227 aa).

Over Met-1 to Ser-14 the chain is Mitochondrial intermembrane. The chain crosses the membrane as a helical span at residues Pro-15–Met-45. At Leu-46–Gln-59 the chain is on the mitochondrial matrix side. A helical membrane pass occupies residues Glu-60–Met-87. The Mitochondrial intermembrane segment spans residues Asp-88–Ile-227. Cu cation is bound by residues His-161, Cys-196, Glu-198, Cys-200, His-204, and Met-207. Residue Glu-198 coordinates Mg(2+).

The protein belongs to the cytochrome c oxidase subunit 2 family. Component of the cytochrome c oxidase (complex IV, CIV), a multisubunit enzyme composed of 14 subunits. The complex is composed of a catalytic core of 3 subunits MT-CO1, MT-CO2 and MT-CO3, encoded in the mitochondrial DNA, and 11 supernumerary subunits COX4I, COX5A, COX5B, COX6A, COX6B, COX6C, COX7A, COX7B, COX7C, COX8 and NDUFA4, which are encoded in the nuclear genome. The complex exists as a monomer or a dimer and forms supercomplexes (SCs) in the inner mitochondrial membrane with NADH-ubiquinone oxidoreductase (complex I, CI) and ubiquinol-cytochrome c oxidoreductase (cytochrome b-c1 complex, complex III, CIII), resulting in different assemblies (supercomplex SCI(1)III(2)IV(1) and megacomplex MCI(2)III(2)IV(2)). Found in a complex with TMEM177, COA6, COX18, COX20, SCO1 and SCO2. Interacts with TMEM177 in a COX20-dependent manner. Interacts with COX20. Interacts with COX16. Cu cation serves as cofactor.

Its subcellular location is the mitochondrion inner membrane. The catalysed reaction is 4 Fe(II)-[cytochrome c] + O2 + 8 H(+)(in) = 4 Fe(III)-[cytochrome c] + 2 H2O + 4 H(+)(out). Functionally, component of the cytochrome c oxidase, the last enzyme in the mitochondrial electron transport chain which drives oxidative phosphorylation. The respiratory chain contains 3 multisubunit complexes succinate dehydrogenase (complex II, CII), ubiquinol-cytochrome c oxidoreductase (cytochrome b-c1 complex, complex III, CIII) and cytochrome c oxidase (complex IV, CIV), that cooperate to transfer electrons derived from NADH and succinate to molecular oxygen, creating an electrochemical gradient over the inner membrane that drives transmembrane transport and the ATP synthase. Cytochrome c oxidase is the component of the respiratory chain that catalyzes the reduction of oxygen to water. Electrons originating from reduced cytochrome c in the intermembrane space (IMS) are transferred via the dinuclear copper A center (CU(A)) of subunit 2 and heme A of subunit 1 to the active site in subunit 1, a binuclear center (BNC) formed by heme A3 and copper B (CU(B)). The BNC reduces molecular oxygen to 2 water molecules using 4 electrons from cytochrome c in the IMS and 4 protons from the mitochondrial matrix. The chain is Cytochrome c oxidase subunit 2 (MT-CO2) from Batomys granti (Luzon hairy-tailed rat).